The chain runs to 219 residues: Ribose-5-phosphate isomerase A (219 aa).

Substrate contacts are provided by residues 28–31 (TGST), 81–84 (DGAD), and 94–97 (KGGG). Residue E103 is the Proton acceptor of the active site. K121 contacts substrate.

The protein belongs to the ribose 5-phosphate isomerase family. As to quaternary structure, homodimer.

It carries out the reaction aldehydo-D-ribose 5-phosphate = D-ribulose 5-phosphate. Its pathway is carbohydrate degradation; pentose phosphate pathway; D-ribose 5-phosphate from D-ribulose 5-phosphate (non-oxidative stage): step 1/1. Catalyzes the reversible conversion of ribose-5-phosphate to ribulose 5-phosphate. The polypeptide is Ribose-5-phosphate isomerase A (Photobacterium profundum (strain SS9)).